Reading from the N-terminus, the 262-residue chain is Putative outer membrane protein CPn_1034/CP_0818/CPj1034/CpB1074 (262 aa).

A signal peptide spans 1–17 (MKTWLFFTFLFSCSSFY).

The protein resides in the cell outer membrane. The protein is Putative outer membrane protein CPn_1034/CP_0818/CPj1034/CpB1074 of Chlamydia pneumoniae (Chlamydophila pneumoniae).